The chain runs to 288 residues: Phenazine biosynthesis-like domain-containing protein (288 aa).

Glu-46 is a catalytic residue.

The protein belongs to the PhzF family. In terms of assembly, interacts with UNRIP/MAWD.

The sequence is that of Phenazine biosynthesis-like domain-containing protein (PBLD) from Homo sapiens (Human).